Consider the following 501-residue polypeptide: MATRINYNYEAAVTYTTLKQNERLMNKSLLRLSTGLRILSAADDASGLFIADQLSLVSTGLQQGNRNIQFAISALQIAEGGVAQIYDKLKTMYQKAVSAANDINDPNARAALQRDIENLRDAIQKIAQDTEYNGIRLLDGTLKNGIYIHYGARSEQKLSVAIDDVRASNLGAYLLDLKGQSNSAYDSFANLLTTDTNFDIASTETISIAGVTHSPPTNIVTDARYIADWINGDPTLQQMGIKAKASNRVVGDPWVNVAVDTGDSLTIKFYVGTSTTPAITLTYGPGKTITLDRIISDINSKATGLNLVAKEENGRLVIETSGETVGVEVSKSGTGGTTFSLDQIISGVNKTVNNTNTQASAIKVGDLRIIDDESYTYDFTGIAGAFGLTSPSGTVGITDLYAIDVTTNEGAELAMDILTIAAQKVDEIRSQIGSTIINLQAIYDAKAVAKDNTDNAENIIRNVDFAKEMTEFTKYQIRMQSGIAMLAQANALPQLVLQLLR.

The protein belongs to the bacterial flagellin family.

The protein localises to the secreted. It localises to the bacterial flagellum. Its function is as follows. Flagellin is the subunit protein which polymerizes to form the filaments of bacterial flagella. The sequence is that of Flagellin (flaA) from Aquifex pyrophilus.